A 967-amino-acid chain; its full sequence is Kinesin heavy chain (967 aa).

In terms of domain architecture, Kinesin motor spans asparagine 8 to isoleucine 326. Residue glycine 85–threonine 92 coordinates ATP. The interval valine 173–lysine 314 is microtubule-binding. 2 disordered regions span residues valine 387–aspartate 411 and lysine 923–alanine 967. Residues proline 392–leucine 861 adopt a coiled-coil conformation. The segment at proline 862–alanine 967 is globular. The segment covering glutamine 949–proline 958 has biased composition (polar residues).

Belongs to the TRAFAC class myosin-kinesin ATPase superfamily. Kinesin family. Kinesin subfamily. In terms of assembly, oligomer composed of two heavy chains and two light chains. Interacts with amyloid-beta precursor-like protein (via cytoplasmic domain).

It localises to the cytoplasm. The protein localises to the cytoskeleton. Its subcellular location is the cell projection. It is found in the axon. Functionally, kinesin is a microtubule-associated force-producing protein that may play a role in organelle transport. This is Kinesin heavy chain from Doryteuthis pealeii (Longfin inshore squid).